We begin with the raw amino-acid sequence, 429 residues long: Cell wall protein ECM33 (429 aa).

A signal peptide spans 1-19 (MQFKNALTATAILSASALA). N-linked (GlcNAc...) asparagine glycosylation is found at Asn-21, Asn-56, Asn-82, Asn-196, Asn-209, Asn-227, Asn-234, Asn-241, Asn-267, Asn-279, Asn-304, and Asn-328. Position 339 is a phosphoserine (Ser-339). Over residues 361–401 (LSSTSTESSKSSATSSASSSGDASNAQANVSASASSSSSSS) the composition is skewed to low complexity. The segment at 361–410 (LSSTSTESSKSSATSSASSSGDASNAQANVSASASSSSSSSKKSKGAAPE) is disordered. A glycan (N-linked (GlcNAc...) asparagine) is linked at Asn-389. Residue Gly-406 is the site of GPI-anchor amidated glycine attachment. A propeptide spans 407–429 (AAPELVPATSFMGVVAAVGVALL) (removed in mature form).

This sequence belongs to the SPS2 family. The GPI-anchor is attached to the protein in the endoplasmic reticulum and serves to target the protein to the cell surface. There, the glucosamine-inositol phospholipid moiety is cleaved off and the GPI-modified mannoprotein is covalently attached via its lipidless GPI glycan remnant to the 1,6-beta-glucan of the outer cell wall layer. In terms of processing, extensively N-glycosylated.

The protein resides in the cell membrane. The protein localises to the secreted. It is found in the cell wall. Its function is as follows. Required for proper cell wall integrity and for the correct assembly of the mannoprotein outer layer of the cell wall. Important for apical bud growth. The sequence is that of Cell wall protein ECM33 (ECM33) from Saccharomyces cerevisiae (strain ATCC 204508 / S288c) (Baker's yeast).